Consider the following 231-residue polypeptide: Probable GTP-binding protein EngB (231 aa).

The EngB-type G domain maps to 51–231 (DLSEIAFAGR…RAQLAALASP (181 aa)). Residues 59 to 66 (GRSNVGKS), 86 to 90 (GRTQE), 109 to 112 (DLPG), 176 to 179 (TKAD), and 210 to 212 (TSS) each bind GTP. Mg(2+)-binding residues include Ser66 and Thr88.

The protein belongs to the TRAFAC class TrmE-Era-EngA-EngB-Septin-like GTPase superfamily. EngB GTPase family. Requires Mg(2+) as cofactor.

Necessary for normal cell division and for the maintenance of normal septation. In Rhodospirillum rubrum (strain ATCC 11170 / ATH 1.1.1 / DSM 467 / LMG 4362 / NCIMB 8255 / S1), this protein is Probable GTP-binding protein EngB.